A 1086-amino-acid polypeptide reads, in one-letter code: 1,2-beta-oligoglucan phosphorylase (1086 aa).

Catalysis depends on D741, which acts as the Proton donor.

This sequence belongs to the glycosyl hydrolase 94 family. In terms of assembly, monomer.

It catalyses the reaction [(1-&gt;2)-beta-D-glucosyl](n) + phosphate = [(1-&gt;2)-beta-D-glucosyl](n-1) + alpha-D-glucose 1-phosphate. Functionally, catalyzes the reversible phosphorolysis of beta-(1-&gt;2)-D-glucans. The minimum length of the substrate for the phosphorolytic reaction is 3 D-glucose units. This chain is 1,2-beta-oligoglucan phosphorylase, found in Listeria innocua serovar 6a (strain ATCC BAA-680 / CLIP 11262).